A 181-amino-acid polypeptide reads, in one-letter code: Ribonuclease HII (181 aa).

Residues 1–181 (MICGIDEVGR…SLHRKSFQLI (181 aa)) form the RNase H type-2 domain. Residues Asp-6, Glu-7, and Asp-98 each contribute to the a divalent metal cation site.

It belongs to the RNase HII family. Mn(2+) serves as cofactor. Requires Mg(2+) as cofactor.

The protein localises to the cytoplasm. The enzyme catalyses Endonucleolytic cleavage to 5'-phosphomonoester.. Functionally, endonuclease that specifically degrades the RNA of RNA-DNA hybrids. This is Ribonuclease HII from Borrelia duttonii (strain Ly).